A 257-amino-acid polypeptide reads, in one-letter code: MDIYRLPALSDNYIFLLHDPNQNIGAVVDPAEVRPVIDKLESLGAELVTIFNTHHHFDHVGANKQLIQKFPQLKVYGGVEDRGRIPGQQVFLQEGDRVHFADRVGEVLFVPGHTIGHIAYYFPSVAFGETGELFCGDTLFAGGCGRLFEGTPAQMVDSLNKLRNLPDNTRIWCAHEYTLKNLQFAITVDKDNTDLQSRWAEVKTARGRNEATVPSMIGVEKRTNPFLRWEQPALQLAVQSQDPVQTFARLRGRKDRF.

Positions 54, 56, 58, 59, 113, 137, and 175 each coordinate Zn(2+).

Belongs to the metallo-beta-lactamase superfamily. Glyoxalase II family. Monomer. The cofactor is Zn(2+).

It carries out the reaction an S-(2-hydroxyacyl)glutathione + H2O = a 2-hydroxy carboxylate + glutathione + H(+). The protein operates within secondary metabolite metabolism; methylglyoxal degradation; (R)-lactate from methylglyoxal: step 2/2. Functionally, thiolesterase that catalyzes the hydrolysis of S-D-lactoyl-glutathione to form glutathione and D-lactic acid. The sequence is that of Hydroxyacylglutathione hydrolase from Trichodesmium erythraeum (strain IMS101).